The primary structure comprises 370 residues: uncharacterized protein (370 aa).

A run of 10 helical transmembrane segments spans residues 6–26 (AVVF…CLGN), 49–69 (IGIV…VAPF), 79–99 (SFAN…GEMA), 111–131 (FLGT…LGII), 143–163 (ILIG…CAGF), 167–187 (MIGK…FGLW), 206–226 (MVAI…IVLI), 236–256 (IQTT…TAFI), 307–327 (VAFA…VAGM), and 333–353 (AAMI…AAWM).

Belongs to the EutH family.

Its subcellular location is the cell membrane. This is an uncharacterized protein from Bacillus subtilis (strain 168).